We begin with the raw amino-acid sequence, 459 residues long: Argininosuccinate lyase (459 aa).

It belongs to the lyase 1 family. Argininosuccinate lyase subfamily.

The protein localises to the cytoplasm. The enzyme catalyses 2-(N(omega)-L-arginino)succinate = fumarate + L-arginine. It functions in the pathway amino-acid biosynthesis; L-arginine biosynthesis; L-arginine from L-ornithine and carbamoyl phosphate: step 3/3. This Lactococcus lactis subsp. lactis (strain IL1403) (Streptococcus lactis) protein is Argininosuccinate lyase.